Reading from the N-terminus, the 239-residue chain is Lipoprotein-releasing system ATP-binding protein LolD (239 aa).

The 226-residue stretch at 14–239 folds into the ABC transporter domain; that stretch reads IRAERLGKTY…KLRELAPSAV (226 aa). 50-57 contacts ATP; sequence GASGAGKS.

This sequence belongs to the ABC transporter superfamily. Lipoprotein translocase (TC 3.A.1.125) family. As to quaternary structure, the complex is composed of two ATP-binding proteins (LolD) and two transmembrane proteins (LolC and LolE).

It localises to the cell inner membrane. Its function is as follows. Part of the ABC transporter complex LolCDE involved in the translocation of mature outer membrane-directed lipoproteins, from the inner membrane to the periplasmic chaperone, LolA. Responsible for the formation of the LolA-lipoprotein complex in an ATP-dependent manner. In Xanthomonas campestris pv. campestris (strain 8004), this protein is Lipoprotein-releasing system ATP-binding protein LolD.